The chain runs to 188 residues: Peptidyl-tRNA hydrolase (188 aa).

Tyrosine 14 contributes to the tRNA binding site. The active-site Proton acceptor is the histidine 19. TRNA is bound by residues tyrosine 64, asparagine 66, and asparagine 112.

This sequence belongs to the PTH family. As to quaternary structure, monomer.

It localises to the cytoplasm. The catalysed reaction is an N-acyl-L-alpha-aminoacyl-tRNA + H2O = an N-acyl-L-amino acid + a tRNA + H(+). In terms of biological role, hydrolyzes ribosome-free peptidyl-tRNAs (with 1 or more amino acids incorporated), which drop off the ribosome during protein synthesis, or as a result of ribosome stalling. Functionally, catalyzes the release of premature peptidyl moieties from peptidyl-tRNA molecules trapped in stalled 50S ribosomal subunits, and thus maintains levels of free tRNAs and 50S ribosomes. Releases Ala-tailed nascent peptides from stalled 50S ribosomal subunits. Non-templated Ala tailing occurs as part of the ribosome quality control (RQC) pathway. In the absence of Ala tails significantly less peptide release occurs. The Ala tail facilitates the interaction of Pth with the nascent peptide-tRNA ester bond as well as promoting nascent chain degradation; 3 Ala residues suffice to stimulate peptide release from stalled 50S ribosomal subunits. Complements a temperature-sensitive pth mutation in E.coli. The polypeptide is Peptidyl-tRNA hydrolase (Bacillus subtilis (strain 168)).